Here is a 473-residue protein sequence, read N- to C-terminus: MALQTREARTLAEKVWDDHVVVSGRNEAPDLIYIDLHQVHEVTSPQAFDGLRLAGRPVRRPDLTIATEDHNVPTVDIDKPIADPVSRTQVETLRRNCAEFGIRLHPMGDVEQGIVHVVGPQLGLTQPGMTIVCGDSHTSTHGAFGALAMGIGTSEVEHVLATQTLPLWPFKTMAVNVDGQLPAGVSAKDIILALIAKIGTGGGQGHVIEYQGSAIESLSMEGRMTICNMSIEAGARAGMVAPDETTYEYLRNRPHAPTGAQWDAALGYWQQLRTDPGAVFDTEVHLDAAELSPFVTWGTNPGQGVPLCATVPDPELIGDDGERQAAEKALAYMDLEPGKAMRDIAVDAVFVGSCTNGRIEDLRVVAEVLRGRKVAPGVRMLIVPGSMRVRAQAEKEGLGEVFTVAGAEWRQAGCSMCLGMNPDQLAPGERCAATSNRNFEGRQGKGGRTHLVSPAVAAATAVRGTLSAPADLN.

[4Fe-4S] cluster is bound by residues cysteine 354, cysteine 414, and cysteine 417.

This sequence belongs to the aconitase/IPM isomerase family. LeuC type 1 subfamily. As to quaternary structure, heterodimer of LeuC and LeuD. [4Fe-4S] cluster is required as a cofactor.

It carries out the reaction (2R,3S)-3-isopropylmalate = (2S)-2-isopropylmalate. Its pathway is amino-acid biosynthesis; L-leucine biosynthesis; L-leucine from 3-methyl-2-oxobutanoate: step 2/4. In terms of biological role, catalyzes the isomerization between 2-isopropylmalate and 3-isopropylmalate, via the formation of 2-isopropylmaleate. The sequence is that of 3-isopropylmalate dehydratase large subunit from Mycobacterium ulcerans (strain Agy99).